Here is a 293-residue protein sequence, read N- to C-terminus: Nucleotide-binding protein Csac_1160 (293 aa).

ATP is bound at residue 11 to 18; it reads GMSGAGKS. 62–65 lines the GTP pocket; sequence DIRG.

This sequence belongs to the RapZ-like family.

In terms of biological role, displays ATPase and GTPase activities. This Caldicellulosiruptor saccharolyticus (strain ATCC 43494 / DSM 8903 / Tp8T 6331) protein is Nucleotide-binding protein Csac_1160.